A 165-amino-acid chain; its full sequence is NADPH-dependent 7-cyano-7-deazaguanine reductase (165 aa).

The active-site Thioimide intermediate is Cys56. The active-site Proton donor is Asp63. Residues Val78–Ser80 and His97–Glu98 each bind substrate.

This sequence belongs to the GTP cyclohydrolase I family. QueF type 1 subfamily.

The protein localises to the cytoplasm. The enzyme catalyses 7-aminomethyl-7-carbaguanine + 2 NADP(+) = 7-cyano-7-deazaguanine + 2 NADPH + 3 H(+). Its pathway is tRNA modification; tRNA-queuosine biosynthesis. In terms of biological role, catalyzes the NADPH-dependent reduction of 7-cyano-7-deazaguanine (preQ0) to 7-aminomethyl-7-deazaguanine (preQ1). The protein is NADPH-dependent 7-cyano-7-deazaguanine reductase of Bacillus thuringiensis subsp. konkukian (strain 97-27).